We begin with the raw amino-acid sequence, 237 residues long: tRNA (guanine-N(7)-)-methyltransferase (237 aa).

S-adenosyl-L-methionine-binding residues include Glu-65, Glu-90, Asp-117, and Asp-140. The active site involves Asp-140. Substrate-binding positions include Lys-144, Asp-176, and 212–215 (TKFE). Residues 197–217 (TCGPRQFSPRGERPETKFERR) form a disordered region. Over residues 206–217 (RGERPETKFERR) the composition is skewed to basic and acidic residues.

Belongs to the class I-like SAM-binding methyltransferase superfamily. TrmB family.

The enzyme catalyses guanosine(46) in tRNA + S-adenosyl-L-methionine = N(7)-methylguanosine(46) in tRNA + S-adenosyl-L-homocysteine. It functions in the pathway tRNA modification; N(7)-methylguanine-tRNA biosynthesis. Its function is as follows. Catalyzes the formation of N(7)-methylguanine at position 46 (m7G46) in tRNA. The polypeptide is tRNA (guanine-N(7)-)-methyltransferase (Alkalilimnicola ehrlichii (strain ATCC BAA-1101 / DSM 17681 / MLHE-1)).